Consider the following 175-residue polypeptide: ALAGTIIAGASLTFQVLDKVLEELGKVSRKIAVGIDNESGGTWTALNAYFRSGTTDVILPEFVPNTKALLYSGRKDTGPVATGAVAAFAYYMSSGNTLGVMFSVPFDYNWYSNWWDVKIYSGKRRADQGMYEDLYYGNPYRGDNGWHEKNLGYGLRMKGIMTSAGEAKMQIKISR.

The segment at 1 to 10 (ALAGTIIAGA) is plays an important role in the hemolytic activity. Positions 9-28 (GASLTFQVLDKVLEELGKVS) are N-terminal region. Positions 52, 85, 103, 105, 131, 135, and 136 each coordinate phosphocholine. Residues 103 to 118 (SVPFDYNWYSNWWDVK) are trp-rich region, which is important for the binding to lipid membrane. The Cell attachment site, crucial for protein stability signature appears at 141 to 143 (RGD).

In terms of assembly, octamer or nonamer in membranes. Monomer in the soluble state. Originally described as forming tetramer in the presence of a lipidic interface. As to expression, expressed in tentacles and mesenteric filaments.

The protein localises to the secreted. The protein resides in the nematocyst. It is found in the target cell membrane. In terms of biological role, pore-forming protein that forms cations-selective hydrophilic pores of around 1 nm and causes cardiac stimulation and cytolysis. Pore formation is a multi-step process that involves specific recognition of membrane sphingomyelin (but neither cholesterol nor phosphatidylcholine) using aromatic rich region and adjacent phosphocholine (POC) binding site, firm binding to the membrane (mainly driven by hydrophobic interactions) accompanied by the transfer of the N-terminal region to the lipid-water interface and finally pore formation after oligomerization of monomers. Cytolytic effects include red blood cells hemolysis, platelet aggregation and lysis, cytotoxic and cytostatic effects on fibroblasts. Lethality in mammals has been ascribed to severe vasospasm of coronary vessels, cardiac arrhythmia, and inotropic effects. This Stichodactyla helianthus (Sun anemone) protein is DELTA-stichotoxin-She4b.